We begin with the raw amino-acid sequence, 140 residues long: Large ribosomal subunit protein bL34m (140 aa).

This sequence belongs to the bacterial ribosomal protein bL34 family. As to quaternary structure, component of the mitochondrial large ribosomal subunit (mt-LSU). Mature N.crassa 74S mitochondrial ribosomes consist of a small (37S) and a large (54S) subunit. The 37S small subunit contains a 16S ribosomal RNA (16S mt-rRNA) and 32 different proteins. The 54S large subunit contains a 23S rRNA (23S mt-rRNA) and 42 different proteins.

The protein resides in the mitochondrion. In terms of biological role, component of the mitochondrial ribosome (mitoribosome), a dedicated translation machinery responsible for the synthesis of mitochondrial genome-encoded proteins, including at least some of the essential transmembrane subunits of the mitochondrial respiratory chain. The mitoribosomes are attached to the mitochondrial inner membrane and translation products are cotranslationally integrated into the membrane. This is Large ribosomal subunit protein bL34m (mrpl34) from Neurospora crassa (strain ATCC 24698 / 74-OR23-1A / CBS 708.71 / DSM 1257 / FGSC 987).